Here is a 357-residue protein sequence, read N- to C-terminus: Arginine kinase (357 aa).

Ala-2 is modified (N-acetylalanine). The Phosphagen kinase N-terminal domain maps to 9–91 (KLEEGFKKLE…FDPIIEDYHK (83 aa)). 64-68 (GVGVY) is a binding site for L-arginine. Positions 119–356 (FVISTRVRCG…LELIKIEKEM (238 aa)) constitute a Phosphagen kinase C-terminal domain. ATP contacts are provided by residues 122-126 (STRVR) and His-185. Residue Glu-225 participates in L-arginine binding. Arg-229 lines the ATP pocket. Cys-271 serves as a coordination point for L-arginine. ATP is bound by residues 280–284 (RASVH) and 309–314 (RGTRGE). Residue Glu-314 participates in L-arginine binding.

It belongs to the ATP:guanido phosphotransferase family.

It carries out the reaction L-arginine + ATP = N(omega)-phospho-L-arginine + ADP + H(+). In Carcinus maenas (Common shore crab), this protein is Arginine kinase.